The sequence spans 484 residues: Phosphoenolpyruvate carboxylase (484 aa).

This sequence belongs to the PEPCase type 2 family. In terms of assembly, homotetramer. It depends on Mg(2+) as a cofactor.

The enzyme catalyses oxaloacetate + phosphate = phosphoenolpyruvate + hydrogencarbonate. Its function is as follows. Catalyzes the irreversible beta-carboxylation of phosphoenolpyruvate (PEP) to form oxaloacetate (OAA), a four-carbon dicarboxylic acid source for the tricarboxylic acid cycle. The polypeptide is Phosphoenolpyruvate carboxylase (Methanospirillum hungatei JF-1 (strain ATCC 27890 / DSM 864 / NBRC 100397 / JF-1)).